Reading from the N-terminus, the 147-residue chain is uncharacterized protein (147 aa).

Residues 1-37 form a disordered region; that stretch reads MVALFKSSLGRPEQHQTPQIRISPASSNVEHSEKQPR. Residues 15 to 29 are compositionally biased toward polar residues; that stretch reads HQTPQIRISPASSNV. Residues 71–147 form the Cytochrome b5 heme-binding domain; the sequence is PIPVTKEELA…LKTSFVGFLV (77 aa). Heme-binding residues include His-106 and His-129.

It belongs to the cytochrome b5 family.

This is an uncharacterized protein from Schizosaccharomyces pombe (strain 972 / ATCC 24843) (Fission yeast).